The following is a 123-amino-acid chain: uncharacterized protein (123 aa).

Helical transmembrane passes span 55-77 (LLIH…STIL) and 92-114 (FFIN…TIVY).

The protein localises to the cell membrane. This is an uncharacterized protein from Pasteurella multocida (strain Pm70).